Consider the following 252-residue polypeptide: Delta-like protein dsl-1 (252 aa).

The N-terminal stretch at 1–17 is a signal peptide; it reads MLKYLIFLAILISVVHS. The 45-residue stretch at 120–164 folds into the DSL domain; sequence IKCNRYWHGLHCDHFCNDDFARTINRRCTQNGTLGCLEGFHGPNC. Intrachain disulfides connect cysteine 122–cysteine 131, cysteine 135–cysteine 147, cysteine 155–cysteine 164, cysteine 173–cysteine 181, cysteine 175–cysteine 197, and cysteine 199–cysteine 209. In terms of domain architecture, EGF-like spans 169-210; sequence PADSCKCQNGGKCVSSLENTWAQNGSLICECRLGHFEGKHCE.

May interact with lin-12/Notch receptor.

It is found in the secreted. Its function is as follows. Probable secreted Notch ligand involved in the mediation of Notch signaling. Involved in the lin-12/Notch pathway-mediated signaling of cell fate in vulval precursor cells (VPCs), acting redundantly with lag-2, apx-1 and osm-11. May also be involved in glp-1/Notch signaling. This is Delta-like protein dsl-1 from Caenorhabditis elegans.